Reading from the N-terminus, the 603-residue chain is NADH-quinone oxidoreductase subunit C/D (603 aa).

Residues 1 to 193 (MVNNMTDLTA…DPFTLTKQKE (193 aa)) are NADH dehydrogenase I subunit C. Residues 217–603 (DFMFLNLGPN…IDFVMSDVDR (387 aa)) are NADH dehydrogenase I subunit D.

In the N-terminal section; belongs to the complex I 30 kDa subunit family. It in the C-terminal section; belongs to the complex I 49 kDa subunit family. As to quaternary structure, NDH-1 is composed of 13 different subunits. Subunits NuoB, CD, E, F, and G constitute the peripheral sector of the complex.

The protein localises to the cell inner membrane. The enzyme catalyses a quinone + NADH + 5 H(+)(in) = a quinol + NAD(+) + 4 H(+)(out). In terms of biological role, NDH-1 shuttles electrons from NADH, via FMN and iron-sulfur (Fe-S) centers, to quinones in the respiratory chain. The immediate electron acceptor for the enzyme in this species is believed to be ubiquinone. Couples the redox reaction to proton translocation (for every two electrons transferred, four hydrogen ions are translocated across the cytoplasmic membrane), and thus conserves the redox energy in a proton gradient. The sequence is that of NADH-quinone oxidoreductase subunit C/D from Cronobacter sakazakii (strain ATCC BAA-894) (Enterobacter sakazakii).